The primary structure comprises 155 residues: MNQAELQRHMEEVSLQFFQKEFRHQAVFNARLRTTGGRYLLKSHNIEMNPKYLENFGLAYFIGIMKHELCHYHLHLEKKGYQHRDQDFRELLKKVDAPRFCATIPREITMHEYTCKSCGKSFLRQRRFNVNRYRCGSCGGKLIQTGSKKIYTENA.

Positions 7 to 145 (QRHMEEVSLQ…GSCGGKLIQT (139 aa)) constitute a SprT-like domain. Histidine 67 is a Zn(2+) binding site. The active site involves glutamate 68. Histidine 71 contacts Zn(2+).

The protein belongs to the SprT family. Zn(2+) is required as a cofactor.

It is found in the cytoplasm. This is Protein SprT-like from Listeria monocytogenes serotype 4b (strain CLIP80459).